A 441-amino-acid chain; its full sequence is Keratin, type I cytoskeletal 17 (441 aa).

Residues 1–23 are disordered; sequence MTTTIRHFSSGSIKGSSGLAGGS. The interval 1 to 91 is head; sequence MTTTIRHFSS…GGVDGLLVGG (91 aa). The segment covering 9–23 has biased composition (low complexity); that stretch reads SSGSIKGSSGLAGGS. Position 12 is a phosphoserine (serine 12). A Glycyl lysine isopeptide (Lys-Gly) (interchain with G-Cter in SUMO1); alternate cross-link involves residue lysine 14. A Glycyl lysine isopeptide (Lys-Gly) (interchain with G-Cter in SUMO2); alternate cross-link involves residue lysine 14. Serine 24, serine 30, serine 32, and serine 37 each carry phosphoserine. Serine 42 carries the phosphoserine; by RPS6KA1 modification. The coil 1A stretch occupies residues 92–128; sequence EKATMQNLNDRLASYLDKVRALEEANTELELKIRDWY. An IF rod domain is found at 92–403; it reads EKATMQNLND…RLLEGEDAHL (312 aa). Threonine 118 is subject to Phosphothreonine. The linker 1 stretch occupies residues 129–146; it reads QKQAPGPAPDYSSYFKTI. Residues 147–238 are coil 1B; sequence EDLRNKIHTA…NHEEEMKALR (92 aa). Residues 239 to 258 form a linker 12 region; it reads GQVGGEINVEMDAAPGVDLS. A coil 2 region spans residues 259–400; that stretch reads RILNEMRDQY…TYRRLLEGED (142 aa). Residue lysine 286 forms a Glycyl lysine isopeptide (Lys-Gly) (interchain with G-Cter in SUMO2) linkage. Residue threonine 287 is modified to Phosphothreonine. Serine 331 carries the post-translational modification Phosphoserine. The tract at residues 401–441 is tail; the sequence is AHLTQYKTKEPVTTRQVRTIVEEVQDGRVISSREQVHQTSH. Residues lysine 407 and lysine 409 each participate in a glycyl lysine isopeptide (Lys-Gly) (interchain with G-Cter in SUMO1); alternate cross-link. Residues lysine 407 and lysine 409 each participate in a glycyl lysine isopeptide (Lys-Gly) (interchain with G-Cter in SUMO2); alternate cross-link.

It belongs to the intermediate filament family. In terms of assembly, heterodimer of a type I and a type II keratin. KRT17 associates with KRT6 isomers (KRT6A or KRT6B). Interacts with TRADD and SFN. In terms of processing, phosphorylation at Ser-42 occurs in a growth- and stress-dependent fashion in skin keratinocytes, it has no effect on filament organization.

The protein localises to the cytoplasm. Its function is as follows. Type I keratin involved in the formation and maintenance of various skin appendages, specifically in determining shape and orientation of hair. Required for the correct growth of hair follicles, in particular for the persistence of the anagen (growth) state. Modulates the function of TNF-alpha in the specific context of hair cycling. Regulates protein synthesis and epithelial cell growth through binding to the adapter protein SFN and by stimulating Akt/mTOR pathway. Involved in tissue repair. May be a marker of basal cell differentiation in complex epithelia and therefore indicative of a certain type of epithelial 'stem cells'. Acts as a promoter of epithelial proliferation by acting a regulator of immune response in skin: promotes Th1/Th17-dominated immune environment contributing to the development of basaloid skin tumors. May act as an autoantigen in the immunopathogenesis of psoriasis, with certain peptide regions being a major target for autoreactive T-cells and hence causing their proliferation. The sequence is that of Keratin, type I cytoskeletal 17 from Bos taurus (Bovine).